We begin with the raw amino-acid sequence, 215 residues long: Pyrrolidone-carboxylate peptidase 1 (215 aa).

Catalysis depends on residues Glu-80, Cys-143, and His-167.

The protein belongs to the peptidase C15 family. Homotetramer.

Its subcellular location is the cytoplasm. It catalyses the reaction Release of an N-terminal pyroglutamyl group from a polypeptide, the second amino acid generally not being Pro.. Removes 5-oxoproline from various penultimate amino acid residues except L-proline. This Ralstonia nicotianae (strain ATCC BAA-1114 / GMI1000) (Ralstonia solanacearum) protein is Pyrrolidone-carboxylate peptidase 1.